The chain runs to 679 residues: Protein SQS1 (679 aa).

Disordered stretches follow at residues 1–40 (MAKR…RNNS), 76–161 (DSMR…PEPK), 242–315 (VSEE…PGFG), and 391–419 (PEEP…QDDE). Residues 16 to 32 (RGRRGGRAGHRGRGGRR) show a composition bias toward basic residues. Residues 146–156 (GDDEPEGEYEP) are compositionally biased toward acidic residues. The span at 406 to 419 (ENYDDSEEDEQDDE) shows a compositional bias: acidic residues. The R3H domain occupies 514-576 (GFHIENIIDE…HTRVLVQKGG (63 aa)). In terms of domain architecture, G-patch spans 633-679 (QDNVGRRLLEKLGWTHGEGLGVHGNKGISEPLMARVKKNRSGLRYTE).

The protein belongs to the SQS1 family.

The protein resides in the cytoplasm. It is found in the nucleus. Functionally, may be involved in splicing. This Eremothecium gossypii (strain ATCC 10895 / CBS 109.51 / FGSC 9923 / NRRL Y-1056) (Yeast) protein is Protein SQS1 (SQS1).